Here is a 224-residue protein sequence, read N- to C-terminus: Pyridoxal 5'-phosphate synthase subunit SNO1 (224 aa).

67–69 (GES) serves as a coordination point for L-glutamine. The active-site Nucleophile is Cys-100. L-glutamine contacts are provided by residues Arg-129 and 160 to 161 (IR). Active-site charge relay system residues include His-203 and Glu-205.

Belongs to the glutaminase PdxT/SNO family.

It catalyses the reaction aldehydo-D-ribose 5-phosphate + D-glyceraldehyde 3-phosphate + L-glutamine = pyridoxal 5'-phosphate + L-glutamate + phosphate + 3 H2O + H(+). It carries out the reaction L-glutamine + H2O = L-glutamate + NH4(+). It functions in the pathway cofactor biosynthesis; pyridoxal 5'-phosphate biosynthesis. In terms of biological role, catalyzes the hydrolysis of glutamine to glutamate and ammonia as part of the biosynthesis of pyridoxal 5'-phosphate. The resulting ammonia molecule is channeled to the active site of a SNZ isoform. This chain is Pyridoxal 5'-phosphate synthase subunit SNO1 (SNO1), found in Saccharomyces cerevisiae (strain ATCC 204508 / S288c) (Baker's yeast).